The primary structure comprises 116 residues: MRRKIVKIKKSYEFKKVYSNGKSVANQFVVMYYMENNLGFNRVGYSVSKKIGKSVVRNRVRRLLHESFRLLDIEIKTGFDIIFVARGKIVEADFHTLKNSMRKLIMKTPLYAGNEK.

It belongs to the RnpA family. As to quaternary structure, consists of a catalytic RNA component (M1 or rnpB) and a protein subunit.

The catalysed reaction is Endonucleolytic cleavage of RNA, removing 5'-extranucleotides from tRNA precursor.. Functionally, RNaseP catalyzes the removal of the 5'-leader sequence from pre-tRNA to produce the mature 5'-terminus. It can also cleave other RNA substrates such as 4.5S RNA. The protein component plays an auxiliary but essential role in vivo by binding to the 5'-leader sequence and broadening the substrate specificity of the ribozyme. The protein is Ribonuclease P protein component of Thermoanaerobacter pseudethanolicus (strain ATCC 33223 / 39E) (Clostridium thermohydrosulfuricum).